Reading from the N-terminus, the 343-residue chain is MALTPTNLNNKMSLQMKMDCQEQQLTKKNNGFFQKLNVTEGAMQDLLKEIIKVDHILDRSDDEDDISSENPQTDFLHKGMLELEAEHDQDLSKQDKQETDVDEDPQASTSLQFSKKNLLELCLKGMFLKLNYWNTKIGLQVKELGADYIDGTEKIDNIIKKINVTENTVKSLLKDMLTLKGQIEKLEDRGLDLDQGTSTEVNTCNEVYELKKKVIERLEDLCKNVELLSAKLRMYQMEAEDTDSHSSEEIDTEEMEALLPQAPASFLVQKSPPRNTAWKRALRIFIMFDVLTVTGLLCYILFFGATFLFERVLLRMLGCRTTWDLREMREPFLNLEVEALLPS.

The span at 86-99 shows a compositional bias: basic and acidic residues; the sequence is EHDQDLSKQDKQET. The interval 86 to 108 is disordered; the sequence is EHDQDLSKQDKQETDVDEDPQAS. Residues 152-238 adopt a coiled-coil conformation; it reads TEKIDNIIKK…SAKLRMYQME (87 aa). A helical transmembrane segment spans residues 284 to 304; the sequence is IFIMFDVLTVTGLLCYILFFG.

The protein resides in the membrane. This chain is Single-pass membrane and coiled-coil domain-containing protein 2 (SMCO2), found in Homo sapiens (Human).